Here is a 355-residue protein sequence, read N- to C-terminus: Lamassu protein LmuA (355 aa).

Functionally, component of antiviral defense system Lamassu type II, composed of LmuA and LmuB. Expression of Lamassu type II in B.subtilis (strain BEST7003) confers resistance to phage SpBeta. May be a nuclease. The sequence is that of Lamassu protein LmuA from Bacillus cereus (strain VD014).